A 200-amino-acid chain; its full sequence is Probable nicotinate-nucleotide adenylyltransferase (200 aa).

Belongs to the NadD family.

It catalyses the reaction nicotinate beta-D-ribonucleotide + ATP + H(+) = deamido-NAD(+) + diphosphate. It functions in the pathway cofactor biosynthesis; NAD(+) biosynthesis; deamido-NAD(+) from nicotinate D-ribonucleotide: step 1/1. Catalyzes the reversible adenylation of nicotinate mononucleotide (NaMN) to nicotinic acid adenine dinucleotide (NaAD). This Clavibacter sepedonicus (Clavibacter michiganensis subsp. sepedonicus) protein is Probable nicotinate-nucleotide adenylyltransferase.